A 375-amino-acid polypeptide reads, in one-letter code: S-(hydroxymethyl)glutathione dehydrogenase (375 aa).

Cys40 lines the Zn(2+) pocket. His41 provides a ligand contact to NAD(+). Zn(2+)-binding residues include His62, Glu63, Cys92, Cys95, Cys98, Cys106, and Cys170. Residues 195-200 (GLGGIG), Asp219, 293-295 (IGV), and 318-320 (TAF) contribute to the NAD(+) site.

The protein belongs to the zinc-containing alcohol dehydrogenase family. Class-III subfamily. Homotetramer. Requires Zn(2+) as cofactor.

The catalysed reaction is a primary alcohol + NAD(+) = an aldehyde + NADH + H(+). The enzyme catalyses a secondary alcohol + NAD(+) = a ketone + NADH + H(+). It catalyses the reaction S-(hydroxymethyl)glutathione + NADP(+) = S-formylglutathione + NADPH + H(+). It carries out the reaction S-(hydroxymethyl)glutathione + NAD(+) = S-formylglutathione + NADH + H(+). The catalysed reaction is S-nitrosoglutathione + NADH + H(+) = S-(hydroxysulfenamide)glutathione + NAD(+). Its function is as follows. Oxidizes long-chain alcohols and, in the presence of glutathione, is able to oxidize formaldehyde. Also acts as a S-nitroso-glutathione reductase by catalyzing the NADH-dependent reduction of S-nitrosoglutathione, thereby regulating protein S-nitrosylation. This is S-(hydroxymethyl)glutathione dehydrogenase (flhA) from Paracoccus denitrificans.